Here is a 507-residue protein sequence, read N- to C-terminus: Subtilisin-like protease 1 (507 aa).

A signal peptide spans 1-19 (MGVFRFISISLAAVSAANA). Positions 20-116 (AQILSMPHAQ…VEPDTIISVN (97 aa)) are excised as a propeptide. Residues 34–113 (SYIVMMKDDT…VMFVEPDTII (80 aa)) form the Inhibitor I9 domain. The region spanning 126–400 (SWGLARISNS…NVLISNGGAK (275 aa)) is the Peptidase S8 domain. Residues Asp158 and His190 each act as charge relay system in the active site. The tract at residues 175–198 (GSNQVNDGDDRDGSGHGTHTSGTM) is disordered. N-linked (GlcNAc...) asparagine glycosylation occurs at Asn251. The segment covering 282–294 (NENQDARSSSPAS) has biased composition (polar residues). The disordered stretch occupies residues 282–312 (NENQDARSSSPASEPSVCTVGSSAEDDSRSS). The active-site Charge relay system is Ser345. Residues 378 to 394 (SSSITDVGPGTPTNVLI) show a composition bias toward polar residues. The disordered stretch occupies residues 378–486 (SSSITDVGPG…YPGGDNFDFD (109 aa)). Composition is skewed to pro residues over residues 405-428 (KPAPGPSPNPSQPSEPQQPAPSQP) and 438-449 (EPFPGEPFPGEP). A compositionally biased stretch (low complexity) spans 450–461 (FPGESSPGESAP). The segment covering 462–476 (APAPMPPSPQHPHTP) has biased composition (pro residues).

It belongs to the peptidase S8 family.

It is found in the secreted. Functionally, secreted subtilisin-like serine protease with keratinolytic activity that contributes to pathogenicity. The polypeptide is Subtilisin-like protease 1 (SUB1) (Trichophyton equinum (Horse ringworm fungus)).